The primary structure comprises 344 residues: E3 ubiquitin-protein ligase RING2-A (344 aa).

The interval 2–181 (ATPVNAQCSS…EDNCDSRSHV (180 aa)) is interaction with HIP2. The segment at 48 to 88 (CPICLDMLKNTMTTKECLHRFCSDCIVTALRSGNKECPTCR) adopts an RING-type zinc-finger fold. Residues 90–95 (KLVSKR) form an interaction with nucleosomes via an acidic patch on histone H2A and histone H2B region. Residues 148–230 (QAMHRAQRVR…DPPGGGETGS (83 aa)) are disordered. Positions 180-192 (HVSNPSVHSNQEA) are enriched in polar residues.

Component of chromatin-associated Polycomb (PcG) complexes. Component of a PRC1-like complex. Component of some MLL1/MLL complex.

It is found in the nucleus. Its subcellular location is the cytoplasm. It localises to the chromosome. The catalysed reaction is S-ubiquitinyl-[E2 ubiquitin-conjugating enzyme]-L-cysteine + [acceptor protein]-L-lysine = [E2 ubiquitin-conjugating enzyme]-L-cysteine + N(6)-ubiquitinyl-[acceptor protein]-L-lysine.. It functions in the pathway protein modification; protein ubiquitination. E3 ubiquitin-protein ligase that mediates monoubiquitination of 'Lys-119' of histone H2A (H2AK119Ub), thereby playing a central role in histone code and gene regulation. H2AK119Ub gives a specific tag for epigenetic transcriptional repression. Essential component of a Polycomb group (PcG) multiprotein PRC1-like complex, a complex class required to maintain the transcriptionally repressive state of many genes, including Hox genes, throughout development. PcG PRC1 complex acts via chromatin remodeling and modification of histones, rendering chromatin heritably changed in its expressibility. The sequence is that of E3 ubiquitin-protein ligase RING2-A (rnf2-a) from Xenopus laevis (African clawed frog).